A 427-amino-acid chain; its full sequence is Enolase 2 (427 aa).

Glutamine 165 is a (2R)-2-phosphoglycerate binding site. Catalysis depends on glutamate 207, which acts as the Proton donor. Mg(2+)-binding residues include aspartate 244, glutamate 287, and aspartate 314. Residues lysine 339, arginine 368, serine 369, and lysine 390 each coordinate (2R)-2-phosphoglycerate. Lysine 339 acts as the Proton acceptor in catalysis.

This sequence belongs to the enolase family. Component of the RNA degradosome, a multiprotein complex involved in RNA processing and mRNA degradation. Mg(2+) is required as a cofactor.

The protein resides in the cytoplasm. The protein localises to the secreted. Its subcellular location is the cell surface. It carries out the reaction (2R)-2-phosphoglycerate = phosphoenolpyruvate + H2O. It participates in carbohydrate degradation; glycolysis; pyruvate from D-glyceraldehyde 3-phosphate: step 4/5. Functionally, catalyzes the reversible conversion of 2-phosphoglycerate (2-PG) into phosphoenolpyruvate (PEP). It is essential for the degradation of carbohydrates via glycolysis. The sequence is that of Enolase 2 from Pseudomonas syringae pv. tomato (strain ATCC BAA-871 / DC3000).